A 500-amino-acid polypeptide reads, in one-letter code: Na(+)/H(+) antiporter NhaB (500 aa).

The next 11 membrane-spanning stretches (helical) occupy residues 13 to 33, 34 to 54, 62 to 82, 97 to 117, 129 to 149, 242 to 262, 306 to 326, 350 to 370, 392 to 412, 449 to 469, and 477 to 497; these read FLGASPLWYKQVVIAFLIINP, IAVVTLGPFVTGWLFIIEFIF, CYPLQPGGLIAIQAVLLGLTS, ILLLMFMVAGIYFMKDMLLFI, IVISLIFSFSAALLSAFLDAL, FLYVAPVSMPVLACGLLTVVI, GIVAIILILSLAFHIAEVGLV, FEEALPFTALLVVFFTIVSVI, PIMFFIANGILSAISDNVFVA, VATPNGQAAFLFLLTSAIAPL, and MVWMALPYTVVLSVVGGLCVT.

Belongs to the NhaB Na(+)/H(+) (TC 2.A.34) antiporter family.

Its subcellular location is the cell inner membrane. The catalysed reaction is 2 Na(+)(in) + 3 H(+)(out) = 2 Na(+)(out) + 3 H(+)(in). Functionally, na(+)/H(+) antiporter that extrudes sodium in exchange for external protons. This chain is Na(+)/H(+) antiporter NhaB, found in Marinomonas sp. (strain MWYL1).